The chain runs to 155 residues: Ribosomal RNA large subunit methyltransferase H (155 aa).

Residues L72, G103, and 122-127 (LSALTL) each bind S-adenosyl-L-methionine.

It belongs to the RNA methyltransferase RlmH family. As to quaternary structure, homodimer.

The protein localises to the cytoplasm. The enzyme catalyses pseudouridine(1915) in 23S rRNA + S-adenosyl-L-methionine = N(3)-methylpseudouridine(1915) in 23S rRNA + S-adenosyl-L-homocysteine + H(+). Its function is as follows. Specifically methylates the pseudouridine at position 1915 (m3Psi1915) in 23S rRNA. The sequence is that of Ribosomal RNA large subunit methyltransferase H from Cronobacter sakazakii (strain ATCC BAA-894) (Enterobacter sakazakii).